We begin with the raw amino-acid sequence, 215 residues long: MHFNELRISQDNRFLIIDVSVDNQDYFEDVLLDSIVIDTQDTFVMNGPSDNPLYIYNVEDAYDLTYSLPEQCNCNPVRVEEDESYCFTYGTQQMKNVRLELNIQDLKVSPCSTMFFVYVKSKGTPSTDTPCGFDKDQILGTVINLQPIYKQTLKYLKEVECDCNIPKGFIDMILKLKAIELCVRTGNYPQAIKYWNKFFIKNNCKSPTSNCGCYG.

As to quaternary structure, heterotrimer with THB. The heterotrimers further assemble as 12 docking hubs that anchor the trimeric tail fibers.

Its subcellular location is the virion. Forms the tail hub together with tail hub protein B (THB). This chain is Tail hub protein A, found in Bacteroides phage crAss001 (Bacteroides phage PhiCrAss001).